Here is a 342-residue protein sequence, read N- to C-terminus: Isopentenyl-diphosphate delta-isomerase (342 aa).

Position 11–12 (11–12 (RK)) interacts with substrate. FMN-binding positions include Ser-68, 69–71 (SMT), Ser-99, and Asn-128. 99–101 (SQR) provides a ligand contact to substrate. Gln-162 contributes to the substrate binding site. Mg(2+) is bound at residue Glu-163. Residues Lys-194, Ser-219, Thr-224, 275–277 (GVR), and 296–297 (AK) contribute to the FMN site.

This sequence belongs to the IPP isomerase type 2 family. Homooctamer. Dimer of tetramers. FMN serves as cofactor. The cofactor is NADPH. It depends on Mg(2+) as a cofactor.

It is found in the cytoplasm. The enzyme catalyses isopentenyl diphosphate = dimethylallyl diphosphate. Functionally, involved in the biosynthesis of isoprenoids. Catalyzes the 1,3-allylic rearrangement of the homoallylic substrate isopentenyl (IPP) to its allylic isomer, dimethylallyl diphosphate (DMAPP). The sequence is that of Isopentenyl-diphosphate delta-isomerase from Legionella pneumophila (strain Corby).